A 500-amino-acid chain; its full sequence is Protein-cysteine N-palmitoyltransferase Rasp (500 aa).

Transmembrane regions (helical) follow at residues Ile-15 to Gly-35, Gly-73 to Ile-93, Phe-105 to Leu-125, Ile-134 to Cys-154, Ser-206 to Ile-226, Leu-243 to Leu-263, Phe-293 to Ala-313, Leu-372 to Ile-392, Leu-429 to Ile-449, and Gly-461 to Phe-481. His-381 is an active-site residue.

It belongs to the membrane-bound acyltransferase family. HHAT subfamily.

The protein localises to the membrane. It carries out the reaction N-terminal L-cysteinyl-[protein] + hexadecanoyl-CoA = N-terminal N-hexadecanoyl-L-cysteinyl-[protein] + CoA + H(+). The catalysed reaction is N-terminal L-cysteinyl-[protein]-C-terminal glycyl cholesterol ester + hexadecanoyl-CoA = N-terminal N-hexadecanoyl-L-cysteinyl-[protein]-C-terminal glycyl cholesterol ester + CoA + H(+). Functionally, required in hedgehog (hh) expressing cells for production of appropriate signaling activity in embryos and in the imaginal precursors of adult tissues. Acts within the secretory pathway to catalyze N-terminal palmitoylation of Hh; this lipid modification is required for the embryonic and larval patterning activities of the Hh signal. Not required for Wg signaling. In Drosophila melanogaster (Fruit fly), this protein is Protein-cysteine N-palmitoyltransferase Rasp (rasp).